The primary structure comprises 430 residues: Leucoanthocyanidin dioxygenase (430 aa).

In terms of domain architecture, Fe2OG dioxygenase spans 212–311 (LLLQMKINYY…RFSWAIFCEP (100 aa)). Residues H236, D238, and H292 each contribute to the Fe cation site. Composition is skewed to basic and acidic residues over residues 376 to 407 (KKDN…KEDG) and 415 to 430 (KVFK…EESK). The disordered stretch occupies residues 376 to 430 (KKDNQDAVAENKDIKEDEQCGPAEHKDIKEDGQGAAAENKVFKENNQDVAAEESK).

Belongs to the iron/ascorbate-dependent oxidoreductase family. It depends on Fe cation as a cofactor. L-ascorbate serves as cofactor. In terms of tissue distribution, predominantly expressed in corollas and at lower levels in anthers.

The catalysed reaction is a (2R,3S,4S)-leucoanthocyanidin + 2-oxoglutarate + O2 = a 4-H-anthocyanidin with a 3-hydroxy group + succinate + CO2 + 2 H2O. The protein operates within pigment biosynthesis; anthocyanin biosynthesis. Oxidation of leucoanthocyanidins into anthocyanidins. The protein is Leucoanthocyanidin dioxygenase (ANT17) of Petunia hybrida (Petunia).